A 719-amino-acid chain; its full sequence is Plasmin and fibronectin-binding protein A (719 aa).

Positions 1-45 (MLKIVKKLEVLMKYFVPNEVFSIRKLKVGTCSVLLAISILGSQGI) are cleaved as a signal peptide. Disordered regions lie at residues 56 to 76 (PMATKESSNAITNDLDNSPTV) and 109 to 128 (IRSNSQLDNRTVESTVTSTN). PbH1 repeat units lie at residues 287–310 (SNNVTIKNVTFKDSYQGHAIQIAG), 362–384 (SENVTIQNSYFGKSDKSGELVTA), 397–419 (PSNIKILNNHFDNMMYAGVRFTG), 497–523 (VSDITVTKNVINNNSKETEQPNIELLR), and 525–546 (SDNLVVSENSIFGGKEGIVIED). Residues 601-658 (NNLSDKNEKEKNKEEKQSNSNNVIDSNQKNGEFNSSKDNRQMNDKIDNKQDNKTEEVN) adopt a coiled-coil conformation. Over residues 606–617 (KNEKEKNKEEKQ) the composition is skewed to basic and acidic residues. The interval 606 to 655 (KNEKEKNKEEKQSNSNNVIDSNQKNGEFNSSKDNRQMNDKIDNKQDNKTE) is disordered. A compositionally biased stretch (polar residues) spans 623–634 (VIDSNQKNGEFN). Positions 635–655 (SSKDNRQMNDKIDNKQDNKTE) are enriched in basic and acidic residues. Residues 685–689 (LPKTG) carry the LPXTG sorting signal motif. A Pentaglycyl murein peptidoglycan amidated threonine modification is found at threonine 688. The propeptide at 689–719 (GSNKIMELFLTVTGIGLLLTLKGLKYYGKDK) is removed by sortase.

The protein localises to the secreted. The protein resides in the cell wall. Acts as a fibronectin-dependent adhesin and invasin. Binds host (in this case human) fibronectin, plasmin, plasminogen, and human serum albumin. Where the bacteria adhere to human cells there is major recruitment of microvilli which seem to fuse to cover the streptococcal chains. Antibodies to this protein reduce bacterial growth in human blood. This Streptococcus pneumoniae (strain ATCC BAA-255 / R6) protein is Plasmin and fibronectin-binding protein A (pfbA).